A 365-amino-acid polypeptide reads, in one-letter code: MAAARHSTLDFMLGAKADGETILKGLQSIFQEQGMTESVHTWQDHGYLATYINKNGSFANLRIYPHGLVLLDLQSYDGDAQGKEVDSLLNKVEERMKELSQDSTERVKRLPPIVRGGAIDRYWPTADGRLVEYDIDKVVYDEDSPYQNIKILHSKQFGNILILSGDVNLAESDLAYTRAIMGSGKEDYSGKDVLILGGGDGGILCEIVKLKPKMVTMVEIDQMVIDGCKKYMRKTCGDVLDNLKGDCYQVLIEDCIPVLKRYAKEGREFDYVINDLTAVPISTSPEEDSTWEFLRLILDLSMKVLKQDGKYFTQGNCVNLTEALSLYEEQLGRLYCPVEFSKEIVCVPSYLELWVFYTVWKKAKP.

At Ala2 the chain carries N-acetylalanine. At Ser57 the chain carries Phosphoserine. The 241-residue stretch at 121–361 (RYWPTADGRL…ELWVFYTVWK (241 aa)) folds into the PABS domain. Gln147 serves as a coordination point for S-adenosyl 3-(methylsulfanyl)propylamine. Residues Tyr176 and Asp200 each coordinate spermidine. S-adenosyl 3-(methylsulfanyl)propylamine is bound by residues Glu219 and 254-255 (DC). Asp275 serves as the catalytic Proton acceptor. Spermidine contacts are provided by Tyr350 and Glu352.

It belongs to the spermidine/spermine synthase family. Homodimer. Dimerization is mediated through the N-terminal domain and seems to be required for activity as deletion of the N-terminal domain causes complete loss of activity.

It catalyses the reaction S-adenosyl 3-(methylsulfanyl)propylamine + spermidine = spermine + S-methyl-5'-thioadenosine + H(+). It participates in amine and polyamine biosynthesis; spermine biosynthesis; spermine from spermidine: step 1/1. Catalyzes the production of spermine from spermidine and decarboxylated S-adenosylmethionine (dcSAM). In Bos taurus (Bovine), this protein is Spermine synthase (SMS).